The sequence spans 292 residues: Large ribosomal subunit protein bL19m (292 aa).

A disordered region spans residues 41 to 60 (SRFQSTGPSEPGGFKPPPKP). Phosphoserine is present on serine 77.

Belongs to the bacterial ribosomal protein bL19 family. In terms of assembly, component of the mitochondrial ribosome large subunit (39S) which comprises a 16S rRNA and about 50 distinct proteins.

It localises to the mitochondrion. The sequence is that of Large ribosomal subunit protein bL19m (Mrpl19) from Mus musculus (Mouse).